The chain runs to 304 residues: Ribosomal RNA small subunit methyltransferase H (304 aa).

S-adenosyl-L-methionine contacts are provided by residues 50-52, D69, F97, D113, and Q120; that span reads GGH.

It belongs to the methyltransferase superfamily. RsmH family.

The protein localises to the cytoplasm. It carries out the reaction cytidine(1402) in 16S rRNA + S-adenosyl-L-methionine = N(4)-methylcytidine(1402) in 16S rRNA + S-adenosyl-L-homocysteine + H(+). In terms of biological role, specifically methylates the N4 position of cytidine in position 1402 (C1402) of 16S rRNA. In Rippkaea orientalis (strain PCC 8801 / RF-1) (Cyanothece sp. (strain PCC 8801)), this protein is Ribosomal RNA small subunit methyltransferase H.